Here is a 183-residue protein sequence, read N- to C-terminus: Adenine phosphoribosyltransferase (183 aa).

Belongs to the purine/pyrimidine phosphoribosyltransferase family. Homodimer.

It localises to the cytoplasm. It catalyses the reaction AMP + diphosphate = 5-phospho-alpha-D-ribose 1-diphosphate + adenine. It functions in the pathway purine metabolism; AMP biosynthesis via salvage pathway; AMP from adenine: step 1/1. In terms of biological role, catalyzes a salvage reaction resulting in the formation of AMP, that is energically less costly than de novo synthesis. This chain is Adenine phosphoribosyltransferase, found in Erwinia tasmaniensis (strain DSM 17950 / CFBP 7177 / CIP 109463 / NCPPB 4357 / Et1/99).